The primary structure comprises 432 residues: UDP-glucose 6-dehydrogenase (432 aa).

NAD(+) is bound by residues 2-19, V11, D30, K35, T121, and E152; that span reads NITFIGSGYVGLVSGIIM. Residues 148–152, K202, N206, 247–251, and G255 each bind substrate; these read EFLRE and FLNAG. C258 (nucleophile) is an active-site residue. Residue K261 participates in NAD(+) binding. K319 is a binding site for substrate. R326 provides a ligand contact to NAD(+).

It belongs to the UDP-glucose/GDP-mannose dehydrogenase family.

The enzyme catalyses UDP-alpha-D-glucose + 2 NAD(+) + H2O = UDP-alpha-D-glucuronate + 2 NADH + 3 H(+). It functions in the pathway nucleotide-sugar biosynthesis; UDP-alpha-D-glucuronate biosynthesis; UDP-alpha-D-glucuronate from UDP-alpha-D-glucose: step 1/1. The chain is UDP-glucose 6-dehydrogenase (udg) from Rickettsia conorii (strain ATCC VR-613 / Malish 7).